We begin with the raw amino-acid sequence, 244 residues long: 1-(5-phosphoribosyl)-5-[(5-phosphoribosylamino)methylideneamino] imidazole-4-carboxamide isomerase (244 aa).

Aspartate 8 serves as the catalytic Proton acceptor. The active-site Proton donor is the aspartate 130.

It belongs to the HisA/HisF family.

The protein localises to the cytoplasm. It catalyses the reaction 1-(5-phospho-beta-D-ribosyl)-5-[(5-phospho-beta-D-ribosylamino)methylideneamino]imidazole-4-carboxamide = 5-[(5-phospho-1-deoxy-D-ribulos-1-ylimino)methylamino]-1-(5-phospho-beta-D-ribosyl)imidazole-4-carboxamide. The protein operates within amino-acid biosynthesis; L-histidine biosynthesis; L-histidine from 5-phospho-alpha-D-ribose 1-diphosphate: step 4/9. The protein is 1-(5-phosphoribosyl)-5-[(5-phosphoribosylamino)methylideneamino] imidazole-4-carboxamide isomerase of Syntrophomonas wolfei subsp. wolfei (strain DSM 2245B / Goettingen).